A 287-amino-acid polypeptide reads, in one-letter code: POU domain class 2-associating factor 2 (287 aa).

One can recognise an OCA domain in the interval 10–32 (KRVYQGVRVKHTVKDLLAEKRSR). Disordered regions lie at residues 24–51 (DLLAEKRSRQTSNTRLNGSVSSSQPPFI), 161–199 (TVPDGLSQPDPMPADALQSLPPSTSCLSQLESGSSTQHR), and 247–279 (PKVGPLSPEEGSDVSSLHDPSPWTKEDGSMAWG). 2 stretches are compositionally biased toward polar residues: residues 33-49 (QTSNTRLNGSVSSSQPP) and 180-199 (LPPSTSCLSQLESGSSTQHR).

This sequence belongs to the POU2AF family. Interacts with POU2F3 (via the POU domain) in a DNA-dependent manner; this interaction recruits POU2AF2 to chromatin and increases POU2F3 transactivation activity. In terms of tissue distribution, expressed in tuft cells of the small intestine, trachea, thymus, and colon.

Its subcellular location is the cytoplasm. It is found in the cytosol. The protein localises to the nucleus. Functionally, transcriptional coactivator of POU2F3. This complex drives the development of tuft cells, a rare chemosensory cells that coordinate immune and neural functions within mucosal epithelial tissues. The polypeptide is POU domain class 2-associating factor 2 (Mus musculus (Mouse)).